The primary structure comprises 103 residues: Flagellar hook-basal body complex protein FliE (103 aa).

It belongs to the FliE family.

It localises to the bacterial flagellum basal body. This is Flagellar hook-basal body complex protein FliE from Photorhabdus laumondii subsp. laumondii (strain DSM 15139 / CIP 105565 / TT01) (Photorhabdus luminescens subsp. laumondii).